The following is a 556-amino-acid chain: (S)-N-methylcanadine 1-hydroxylase CYP82Y1 (556 aa).

A helical transmembrane segment spans residues 18 to 38; that stretch reads TAVGTLILAFLLTLSPVIIYY. Heme is bound at residue Cys-500.

This sequence belongs to the cytochrome P450 family. The cofactor is heme. As to expression, highly expressed in capsules. Expressed is stems.

The protein resides in the membrane. It catalyses the reaction (S)-cis-N-methylcanadine + reduced [NADPH--hemoprotein reductase] + O2 = (S)-1-hydroxy-N-methylcanadine + oxidized [NADPH--hemoprotein reductase] + H2O + H(+). The protein operates within alkaloid biosynthesis. In terms of biological role, cytochrome P450 involved in the biosynthesis of the benzylisoquinoline alkaloid noscapine. Converts (S)-N-methylcanadine to (S)-1-hydroxy-N-methylcanadine. In Papaver somniferum (Opium poppy), this protein is (S)-N-methylcanadine 1-hydroxylase CYP82Y1.